The primary structure comprises 1998 residues: Histone acetyltransferase KAT6A (1998 aa).

Residues 1 to 77 (MVKLANPLYT…LNSYKDPDNP (77 aa)) form the SAMD1-like winged helix (WH) domain. Residues 1–144 (MVKLANPLYT…CGGTAASGFH (144 aa)) are required for activation of RUNX1-1. Positions 52–166 (ELSVKDGTIL…HGRLLKDGPL (115 aa)) are required for nuclear localization. The segment at 72-93 (KDPDNPGRIALPKPRNHGKLDN) is disordered. The region spanning 95–171 (QSVDWNKLLK…KDGPLYRLNT (77 aa)) is the H15 domain. The interaction with PML stretch occupies residues 144 to 662 (HQQLRLAIKR…RKGYGRFLID (519 aa)). Residue Lys172 is modified to N6-acetyllysine. 2 consecutive PHD-type zinc fingers follow at residues 199-258 (DKPV…LRWQ) and 255-306 (LRWQ…GMWI). An interaction with RUNX1-1 region spans residues 312–662 (PRKKGRKLLQ…RKGYGRFLID (351 aa)). The segment at 336–377 (GRPKNRLKKQSTVSKGPFSKVRTGPGRGRKRKITVSSQSASS) is disordered. Residues Lys350 and Lys355 each carry the N6-acetyllysine modification. A Phosphothreonine; by PKB/AKT1 modification is found at Thr369. Ser419 is subject to Phosphoserine. The interval 440–464 (KGNRKSSTSHWPTDNQDGWESKQES) is disordered. Positions 444-457 (KSSTSHWPTDNQDG) are enriched in polar residues. A Phosphoserine modification is found at Ser471. Residues 486 to 776 (IQEQALQKVG…VDPECLRWTP (291 aa)) are catalytic. The MYST-type HAT domain maps to 502-776 (PQVRCPSVIE…VDPECLRWTP (275 aa)). Residues 505-808 (RCPSVIEFGK…EPQGQERELE (304 aa)) form a mediates interaction with BRPF1, required for histone H3 acetyltransferase activity region. The C2HC MYST-type zinc finger occupies 535–560 (LYLCEFCLKYMKSRTILQQHMKKCGW). Lys602 carries the N6-acetyllysine; by autocatalysis modification. Acetyl-CoA contacts are provided by residues 643–647 (SCIMI) and 652–658 (QRKGYGR). The active-site Proton donor/acceptor is Glu678. Residue Ser682 coordinates acetyl-CoA. Positions 783-947 (VVSEEEDEEA…RFSESADLWR (165 aa)) are disordered. Ser785 is modified (phosphoserine). Over residues 785–797 (SEEEDEEADDGEK) the composition is skewed to acidic residues. The segment covering 798-840 (EEPQGQERELETRERVGKSVSRENKDQDSSSLIESEKKPEVKE) has biased composition (basic and acidic residues). N6-acetyllysine is present on Lys815. Lys835 is covalently cross-linked (Glycyl lysine isopeptide (Lys-Gly) (interchain with G-Cter in SUMO2)). Positions 865–874 (RRGRCGRKNR) are enriched in basic residues. A compositionally biased stretch (basic and acidic residues) spans 875-886 (KTQERFGDKDSK). At Tyr900 the chain carries Phosphotyrosine. The segment covering 903–916 (CEEKSAASRERYTE) has biased composition (basic and acidic residues). Residues Ser940 and Ser953 each carry the phosphoserine modification. A disordered region spans residues 982–1079 (GFSESSEEEE…EEEEDENELF (98 aa)). At Lys1006 the chain carries N6-acetyllysine. Residues 1008 to 1029 (TLKRKKPILHRRRRVRKRKHHN) show a composition bias toward basic residues. Over residues 1030–1041 (SSVVTETISETT) the composition is skewed to low complexity. 2 stretches are compositionally biased toward acidic residues: residues 1042-1052 (EVLDEPFEDSD) and 1064-1077 (FEIEEEEEEEDENE). 3 positions are modified to phosphoserine: Ser1088, Ser1089, and Ser1114. Disordered regions lie at residues 1096-1175 (QASS…PGFK), 1195-1436 (PIKP…EGAY), 1450-1567 (QSYT…STMG), and 1630-1702 (TCVV…CSMN). Residues 1106-1119 (DEEEEEEESDDADD) are compositionally biased toward acidic residues. Residues 1135-1146 (NSASLEPDTSTP) show a composition bias toward polar residues. The span at 1147-1173 (MKKKKGWPKGKSRKPIHWKKRPGRKPG) shows a compositional bias: basic residues. Basic and acidic residues predominate over residues 1203 to 1228 (RTQESEELVEVKEGLVEERKEEMHTE). Acidic residues-rich tracts occupy residues 1229–1240 (ADEEAEEEEDAA) and 1281–1298 (EEPQELEEQEQEEEDEVT). Composition is skewed to basic and acidic residues over residues 1316-1333 (HLDSLKTKEPEGQPARED), 1351-1360 (DSRENAKDKD), and 1392-1413 (DSNTKEELIELKEEEEIPHSEL). Residues 1472–1496 (HNSPISSIPSHPSQSVRSVSSPSMP) show a composition bias toward low complexity. Over residues 1501-1522 (GYTQISPEQGSLSAPSMQNMET) the composition is skewed to polar residues. The interaction with RUNX1-2 stretch occupies residues 1510 to 1635 (GSLSAPSMQN…KSPQTCVVER (126 aa)). Residues 1510–1735 (GSLSAPSMQN…YERIPGDFGA (226 aa)) are interaction with PML. Residues 1527–1541 (DVPSVSDHSQQVVDS) show a composition bias toward low complexity. The span at 1549–1567 (IESTTENYENPSSYDSTMG) shows a compositional bias: polar residues. Pro residues-rich tracts occupy residues 1639–1658 (NQQPPPPPPPPPPPQQPQPQ) and 1665–1693 (PQPPPPQPQQQPPPPPQQQPQPPPPPQQQ). Residues 1907 to 1942 (SMNMNTLNAMNSYRMTQPMMNSSYHSNPAYMNQTAQ) form a required for activation of RUNX1-2 region.

The protein belongs to the MYST (SAS/MOZ) family. As to quaternary structure, component of the MOZ/MORF complex composed at least of ING5, KAT6A, KAT6B, MEAF6 and one of BRPF1, BRD1/BRPF2 and BRPF3. Interacts with RUNX1; phosphorylation of RUNX1 enhances the interaction. Interacts with RUNX2. Interacts with p53/TP53. Interacts with PML and this interaction positively regulates its acetylation activity towards p53/TP53. Autoacetylated. Autoacetylation at Lys-602 is required for proper function. Post-translationally, phosphorylation at Thr-369 by PKB/AKT1 inhibits its interaction with PML and negatively regulates its acetylation activity towards p53/TP53.

Its subcellular location is the nucleus. The protein resides in the nucleolus. It localises to the nucleoplasm. It is found in the PML body. It carries out the reaction L-lysyl-[protein] + acetyl-CoA = N(6)-acetyl-L-lysyl-[protein] + CoA + H(+). Functionally, histone acetyltransferase that acetylates lysine residues in histone H3 and histone H4 (in vitro). Component of the MOZ/MORF complex which has a histone H3 acetyltransferase activity. May act as a transcriptional coactivator for RUNX1 and RUNX2. Acetylates p53/TP53 at 'Lys-120' and 'Lys-382' and controls its transcriptional activity via association with PML. The protein is Histone acetyltransferase KAT6A (Kat6a) of Rattus norvegicus (Rat).